We begin with the raw amino-acid sequence, 143 residues long: uncharacterized protein (143 aa).

In terms of domain architecture, HTH marR-type spans 5–137; that stretch reads DARLASDLSL…LRNAADLILE (133 aa). The H-T-H motif DNA-binding region spans 51 to 74; it reads PGALAIRERVRPPSMTRVIASLAD.

In terms of assembly, homodimer.

This is an uncharacterized protein from Mycobacterium leprae (strain TN).